The primary structure comprises 456 residues: Exodeoxyribonuclease 7 large subunit (456 aa).

It belongs to the XseA family. In terms of assembly, heterooligomer composed of large and small subunits.

It is found in the cytoplasm. The enzyme catalyses Exonucleolytic cleavage in either 5'- to 3'- or 3'- to 5'-direction to yield nucleoside 5'-phosphates.. In terms of biological role, bidirectionally degrades single-stranded DNA into large acid-insoluble oligonucleotides, which are then degraded further into small acid-soluble oligonucleotides. The polypeptide is Exodeoxyribonuclease 7 large subunit (Escherichia coli (strain ATCC 8739 / DSM 1576 / NBRC 3972 / NCIMB 8545 / WDCM 00012 / Crooks)).